The chain runs to 52 residues: Conotoxin reg3h (52 aa).

A signal peptide is located at residue Ala-1. Residues 2-33 (LPLDGDQPADQPAERMQDISPELNPLFHPVKR) constitute a propeptide that is removed on maturation. 3 disulfide bridges follow: Cys-35–Cys-49, Cys-36–Cys-47, and Cys-41–Cys-50. A 4-hydroxyproline mark is found at Pro-38, Pro-48, and Pro-51. Asn-52 is modified (asparagine amide).

As to expression, expressed by the venom duct.

Its subcellular location is the secreted. This chain is Conotoxin reg3h, found in Conus regius (Crown cone).